Consider the following 234-residue polypeptide: Multicopy suppressor of SEC21 protein 28 (234 aa).

The Cytoplasmic portion of the chain corresponds to 1–47 (MQTPPESTDVKLDTLNEPSAHLIEKNVALPKDIFRSYLSYWIYEIAR). T3 is subject to Phosphothreonine. Residues 48 to 68 (YTPVMILSLVIGVLVLLIIFF) form a helical membrane-spanning segment. At 69 to 72 (NDNE) the chain is on the extracellular side. The chain crosses the membrane as a helical span at residues 73-93 (ACVFNSAIFAFTSLVGLLIIL). Topologically, residues 94-234 (SDGNPKLVSR…NIDALLKKTE (141 aa)) are cytoplasmic. The COPI binding stretch occupies residues 231-234 (KKTE).

Belongs to the DUP/COS family. As to quaternary structure, interacts with MST27. Binds to coatomer proteins of COPI and SEC23/SEC24 of COPII coated vesicles.

The protein resides in the endoplasmic reticulum. It is found in the golgi apparatus. Its subcellular location is the cytoplasmic vesicle. It localises to the COPI-coated vesicle membrane. The protein localises to the COPII-coated vesicle membrane. Its function is as follows. Involved in protein trafficking vesicle formation, probably by stabilizing of coatomer at the Golgi membrane and thus allowing the efficient formation of COPI coated vesicles. This Saccharomyces cerevisiae (strain ATCC 204508 / S288c) (Baker's yeast) protein is Multicopy suppressor of SEC21 protein 28 (MST28).